The sequence spans 291 residues: 4-hydroxy-tetrahydrodipicolinate synthase (291 aa).

Thr44 provides a ligand contact to pyruvate. Tyr132 serves as the catalytic Proton donor/acceptor. Catalysis depends on Lys160, which acts as the Schiff-base intermediate with substrate. Val202 provides a ligand contact to pyruvate.

It belongs to the DapA family. As to quaternary structure, homotetramer; dimer of dimers.

The protein resides in the cytoplasm. The catalysed reaction is L-aspartate 4-semialdehyde + pyruvate = (2S,4S)-4-hydroxy-2,3,4,5-tetrahydrodipicolinate + H2O + H(+). Its pathway is amino-acid biosynthesis; L-lysine biosynthesis via DAP pathway; (S)-tetrahydrodipicolinate from L-aspartate: step 3/4. In terms of biological role, catalyzes the condensation of (S)-aspartate-beta-semialdehyde [(S)-ASA] and pyruvate to 4-hydroxy-tetrahydrodipicolinate (HTPA). This chain is 4-hydroxy-tetrahydrodipicolinate synthase, found in Clostridium perfringens (strain ATCC 13124 / DSM 756 / JCM 1290 / NCIMB 6125 / NCTC 8237 / Type A).